Reading from the N-terminus, the 526-residue chain is Glucose-6-phosphate 1-dehydrogenase (526 aa).

Residues 50–57 (GASGDLAK), Arg-84, and Lys-184 contribute to the NADP(+) site. Residues Lys-184, 214–218 (HYLGK), Glu-252, and Asp-271 contribute to the D-glucose 6-phosphate site. The active-site Proton acceptor is the His-276. Arg-370 contacts NADP(+). Residues Lys-373 and Arg-378 each coordinate D-glucose 6-phosphate. 3 residues coordinate NADP(+): Lys-379, Arg-383, and Arg-406. Gln-408 contacts D-glucose 6-phosphate. NADP(+)-binding positions include 414–416 (YFK), 434–436 (DLT), Arg-500, Tyr-516, and Trp-522.

Belongs to the glucose-6-phosphate dehydrogenase family.

The protein localises to the cytoplasm. It localises to the cytosol. The enzyme catalyses D-glucose 6-phosphate + NADP(+) = 6-phospho-D-glucono-1,5-lactone + NADPH + H(+). It functions in the pathway carbohydrate degradation; pentose phosphate pathway; D-ribulose 5-phosphate from D-glucose 6-phosphate (oxidative stage): step 1/3. Functionally, cytosolic glucose-6-phosphate dehydrogenase that catalyzes the first and rate-limiting step of the oxidative branch within the pentose phosphate pathway/shunt, an alternative route to glycolysis for the dissimilation of carbohydrates and a major source of reducing power and metabolic intermediates for fatty acid and nucleic acid biosynthetic processes. The sequence is that of Glucose-6-phosphate 1-dehydrogenase (ZW) from Ceratitis capitata (Mediterranean fruit fly).